The chain runs to 400 residues: NADPH dehydrogenase 3 (400 aa).

The FMN site is built by threonine 38 and glutamine 115. Substrate contacts are provided by histidine 192 and asparagine 195. Tyrosine 197 (proton donor) is an active-site residue. FMN contacts are provided by arginine 244 and arginine 349. Tyrosine 376 lines the substrate pocket.

Homodimer or heterodimer with OYE2. The cofactor is FMN.

It catalyses the reaction A + NADPH + H(+) = AH2 + NADP(+). Its function is as follows. Flavin-dependent enoate reductase that catalyzes the chemo- and stereoslective hydrogenation of electron-poor alkenes. The enzyme is reduced by NADPH, and oxygen, quinones, and alpha,beta-unsaturated aldehydes and ketones can act as electron acceptors to complete catalytic turnover. The physiological oxidant remains elusive. Has a prooxidant activity, increasing reactive oxygen species (ROS) levels when overexpressed. Formation of OYE2-OYE3 heterodimers contribute to the induction of programmed cell death upon oxidative stress. This is NADPH dehydrogenase 3 from Saccharomyces cerevisiae (strain ATCC 204508 / S288c) (Baker's yeast).